The sequence spans 254 residues: Probable 2,4-dienoyl-CoA reductase [(2E)-enoyl-CoA-producing] (254 aa).

6–38 contacts NADP(+); it reads VIITGGSSGMGKAMAKKQAELGWHVMVTGRNHE. Threonine 100 contacts substrate. The active-site Proton acceptor is the tyrosine 142. NAD(+) is bound at residue lysine 157.

Belongs to the short-chain dehydrogenases/reductases (SDR) family. 2,4-dienoyl-CoA reductase subfamily.

The catalysed reaction is a 4,5-saturated-(2E)-enoyl-CoA + NADP(+) = a (2E,4E)-dienoyl-CoA + NADPH + H(+). The enzyme catalyses a (2E,4Z)-dienoyl-CoA + NADPH + H(+) = a 4,5-saturated-(2E)-enoyl-CoA + NADP(+). Its pathway is lipid metabolism; fatty acid beta-oxidation. Its function is as follows. Auxiliary enzyme of beta-oxidation. It participates in the metabolism of unsaturated fatty enoyl-CoA esters having double bonds in both even- and odd-numbered positions. Catalyzes the NADP-dependent reduction of 2,4-dienoyl-CoA to yield trans-3-enoyl-CoA. The chain is Probable 2,4-dienoyl-CoA reductase [(2E)-enoyl-CoA-producing] (fadH) from Bacillus subtilis (strain 168).